A 420-amino-acid chain; its full sequence is Riboflavin biosynthesis protein RibBA (420 aa).

The segment at 1–202 (MTTFGTIEQA…IADLVAYRRR (202 aa)) is DHBP synthase. Residues 28 to 29 (RE), Asp-33, 141 to 145 (RPGHT), and Glu-165 each bind D-ribulose 5-phosphate. A Mg(2+)-binding site is contributed by Glu-29. His-144 serves as a coordination point for Mg(2+). The GTP cyclohydrolase II stretch occupies residues 203–420 (TEKQVELVAE…RAVVGDGIGA (218 aa)). Position 253–257 (253–257 (RVHSE)) interacts with GTP. The Zn(2+) site is built by Cys-258, Cys-269, and Cys-271. Residues Gln-274, 297–299 (EGR), and Thr-319 contribute to the GTP site. Asp-331 (proton acceptor; for GTP cyclohydrolase activity) is an active-site residue. The Nucleophile; for GTP cyclohydrolase activity role is filled by Arg-333. 2 residues coordinate GTP: Thr-354 and Lys-359.

The protein in the N-terminal section; belongs to the DHBP synthase family. In the C-terminal section; belongs to the GTP cyclohydrolase II family. Mg(2+) is required as a cofactor. It depends on Mn(2+) as a cofactor. The cofactor is Zn(2+).

The enzyme catalyses D-ribulose 5-phosphate = (2S)-2-hydroxy-3-oxobutyl phosphate + formate + H(+). The catalysed reaction is GTP + 4 H2O = 2,5-diamino-6-hydroxy-4-(5-phosphoribosylamino)-pyrimidine + formate + 2 phosphate + 3 H(+). It participates in cofactor biosynthesis; riboflavin biosynthesis; 2-hydroxy-3-oxobutyl phosphate from D-ribulose 5-phosphate: step 1/1. Its pathway is cofactor biosynthesis; riboflavin biosynthesis; 5-amino-6-(D-ribitylamino)uracil from GTP: step 1/4. Catalyzes the conversion of D-ribulose 5-phosphate to formate and 3,4-dihydroxy-2-butanone 4-phosphate. Functionally, catalyzes the conversion of GTP to 2,5-diamino-6-ribosylamino-4(3H)-pyrimidinone 5'-phosphate (DARP), formate and pyrophosphate. The chain is Riboflavin biosynthesis protein RibBA from Salinispora arenicola (strain CNS-205).